The chain runs to 360 residues: Probable L-asparaginase 1 (360 aa).

A signal peptide spans 1–16 (MWRSIISFLFFSVALC). 3 N-linked (GlcNAc...) asparagine glycosylation sites follow: Asn-27, Asn-35, and Asn-40. The 321-residue stretch at 39 to 359 (PNVTIFAMGG…QNITDIFSLE (321 aa)) folds into the Asparaginase/glutaminase domain. Residue Thr-49 is the O-isoaspartyl threonine intermediate of the active site. Asn-82 is a glycosylation site (N-linked (GlcNAc...) asparagine). Ser-96 serves as a coordination point for substrate. Asn-106 is a glycosylation site (N-linked (GlcNAc...) asparagine). Substrate is bound at residue 129–130 (TD). Asn-144, Asn-179, Asn-246, Asn-302, and Asn-351 each carry an N-linked (GlcNAc...) asparagine glycan.

The protein belongs to the asparaginase 1 family.

It is found in the secreted. The protein resides in the cell wall. The enzyme catalyses L-asparagine + H2O = L-aspartate + NH4(+). The protein is Probable L-asparaginase 1 of Schizosaccharomyces pombe (strain 972 / ATCC 24843) (Fission yeast).